Here is a 716-residue protein sequence, read N- to C-terminus: Putative mannosyltransferase YkcB (716 aa).

Transmembrane regions (helical) follow at residues 8–28 (LDIV…YNIW), 44–64 (MMQS…FITV), 87–107 (SVIL…YLLI), 118–135 (IASF…VART), 137–157 (NVDA…FKAI), 159–179 (KGKL…FNTK), 180–200 (MLQA…AANA), and 206–226 (IVSL…WPLI). A disordered region spans residues 260-363 (TGQNSGGGQG…GSGMFGTGTP (104 aa)). Residues 278–289 (EMSSSDNTQAPP) show a composition bias toward polar residues. A compositionally biased stretch (low complexity) spans 290–307 (NQSSSNSSSSDGKSSNGN). Over residues 318-347 (PSGGQGGPPSGGDGGQGGPGGDGGKGGTGT) the composition is skewed to gly residues. A run of 6 helical transmembrane segments spans residues 376-396 (QISW…IAGA), 409-429 (TVFW…AEFF), 433-453 (YLIM…VALV), 462-482 (WKAW…LFIL), 491-511 (VGWS…LLLF), and 518-538 (FSYY…MYWA). Residues 664–716 (VASEKWQSSSDQKTENTDSADTSSSKASGENGKMGGPGGMNQSATLYELHADE) are disordered. A compositionally biased stretch (low complexity) spans 680–694 (TDSADTSSSKASGEN).

This sequence belongs to the glycosyltransferase 39 family.

The protein resides in the cell membrane. This chain is Putative mannosyltransferase YkcB (ykcB), found in Bacillus subtilis (strain 168).